We begin with the raw amino-acid sequence, 80 residues long: Calmodulin (80 aa).

EF-hand domains lie at 12–47 (DSEE…LGEK) and 48–80 (LTDE…MTSK). Residues D25, D27, N29, E36, D61, D63, D65, Q67, and E72 each contribute to the Ca(2+) site.

This sequence belongs to the calmodulin family.

In terms of biological role, calmodulin mediates the control of a large number of enzymes, ion channels and other proteins by Ca(2+). Among the enzymes to be stimulated by the calmodulin-Ca(2+) complex are a number of protein kinases and phosphatases. This chain is Calmodulin, found in Strongylocentrotus purpuratus (Purple sea urchin).